A 3987-amino-acid polypeptide reads, in one-letter code: Hybrid PKS-NRPS synthetase buaA (3987 aa).

A Ketosynthase family 3 (KS3) domain is found at 5 to 438; it reads NEPIAIVGSG…GANAHAIVES (434 aa). Active-site for beta-ketoacyl synthase activity residues include C176, H315, and H358. The malonyl-CoA:ACP transacylase (MAT) domain stretch occupies residues 546–872; the sequence is VFTGQGAQWP…RNADDVESFS (327 aa). Positions 939–1072 are N-terminal hotdog fold; the sequence is HELLGVRVDS…GAVRLQLGAA (134 aa). Residues 939-1240 enclose the PKS/mFAS DH domain; sequence HELLGVRVDS…VAPLVPVTQS (302 aa). Residues 940–1238 form a dehydratase (DH) domain region; it reads ELLGVRVDSL…LQVAPLVPVT (299 aa). H970 acts as the Proton acceptor; for dehydratase activity in catalysis. A C-terminal hotdog fold region spans residues 1087 to 1240; sequence MNDVNIEHFY…VAPLVPVTQS (154 aa). The active-site Proton donor; for dehydratase activity is D1147. Positions 1399–1583 are methyltransferase (MT) domain; it reads YLANLVKQLS…TSTPSHDVFM (185 aa). The interval 2113 to 2285 is ketoreductase (KR) domain; sequence TYLLVGLTGE…LPGSVMNLAG (173 aa). Residues 2397–2473 enclose the Carrier 1 domain; it reads RVLTNGLILT…AMVEDTMERM (77 aa). S2433 carries the post-translational modification O-(pantetheine 4'-phosphoryl)serine. The segment at 2489–2561 is disordered; that stretch reads AADRPSAPSD…PPPSSVMSED (73 aa). A compositionally biased stretch (basic and acidic residues) spans 2514-2525; sequence HNSEEQESHAME. Over residues 2532–2550 the composition is skewed to low complexity; the sequence is STTSGGECSSTKESSSSEA. Positions 2582-3001 are condensation (C) domain; sequence MGYGSLQFFF…QLVKMCAYME (420 aa). An adenylation (A) (KR) domain region spans residues 3042–3448; that stretch reads LDVAQARPEA…GQLYYEGRIA (407 aa). Positions 3564 to 3644 constitute a Carrier 2 domain; that stretch reads ADLSETELAL…AMALKIRNSQ (81 aa). An O-(pantetheine 4'-phosphoryl)serine modification is found at S3604. The interval 3680 to 3916 is reductase (R) domain; it reads TVVLTGATGY…TGIAAAAVGA (237 aa).

This sequence in the C-terminal section; belongs to the NRP synthetase family.

It functions in the pathway mycotoxin biosynthesis. Its function is as follows. Hybrid PKS-NRPS synthetase; part of the gene cluster that mediates the biosynthesis of burnettramic acids, an unusual class of bolaamphiphilic pyrrolizidinediones that display potent antibacterial, antifungal, and cytotoxic activities. The first step of the biosynthesis of burnettramic acids is the hydroxylation of proline by the proline hydroxylase buaE to generate 4-hydroxyproline. The PKS-NRPS buaA and trans-enoyl reductase buaC construct the highly reduced polyketide chain, and the condensation (C) domain of buaA then catalyzes the amide bond formation with the activated 4-hydroxyproline. This is followed by the R domain releasing the nascent polyketide-peptide directly via a Dieckmann condensation to afford a tetramic acid fused to the hydroxyproline, generating the bicyclic pyrrolidinedione moiety. The cytochrome P450 monooxygenases buaD and buaG are likely responsible for the multiple hydroxylations on the polyketide chain and its terminus, although in a heterologous context, buaD does not appear to be required. Therefore, while buaG may be a multifunctional cytochrome P450 monooxygenase, it cannot be ruled out that the two secondary alcohols on the polyketide chain could have an acetate origin. Finally, the glycosyltransferase buaB transfers beta-D-mannose to the aglycone burnettramic acid A to form burnettramic acid A. Burnettramic acid B is a minor cis-pyrrolizidine epimer of burnettramic acid A and it is likely that small amounts of it form naturally in acidic environments. The protein is Hybrid PKS-NRPS synthetase buaA of Petromyces alliaceus (Aspergillus alliaceus).